The following is a 258-amino-acid chain: Proteasome subunit alpha (258 aa).

Belongs to the peptidase T1A family. The 20S proteasome core is composed of 14 alpha and 14 beta subunits that assemble into four stacked heptameric rings, resulting in a barrel-shaped structure. The two inner rings, each composed of seven catalytic beta subunits, are sandwiched by two outer rings, each composed of seven alpha subunits. The catalytic chamber with the active sites is on the inside of the barrel. Has a gated structure, the ends of the cylinder being occluded by the N-termini of the alpha-subunits. Is capped by the proteasome-associated ATPase, ARC.

The protein resides in the cytoplasm. It participates in protein degradation; proteasomal Pup-dependent pathway. With respect to regulation, the formation of the proteasomal ATPase ARC-20S proteasome complex, likely via the docking of the C-termini of ARC into the intersubunit pockets in the alpha-rings, may trigger opening of the gate for substrate entry. Interconversion between the open-gate and close-gate conformations leads to a dynamic regulation of the 20S proteasome proteolysis activity. In terms of biological role, component of the proteasome core, a large protease complex with broad specificity involved in protein degradation. This chain is Proteasome subunit alpha, found in Nocardia farcinica (strain IFM 10152).